A 602-amino-acid polypeptide reads, in one-letter code: Alpha-glucosides permease MPH3 (602 aa).

At 1–106 (MKNLSFLINR…AAAWSLLVST (106 aa)) the chain is on the cytoplasmic side. The chain crosses the membrane as a helical span at residues 107 to 127 (TLIMEGYDTAILGAFYALPIF). The Extracellular segment spans residues 128-142 (QRKFGSQNDKTGEWE). Residues 143-163 (ISASWQIGLTLCYMAGEIVGL) traverse the membrane as a helical segment. Residues 164-178 (QLTGPSVDLVGNRYT) lie on the Cytoplasmic side of the membrane. Residues 179-199 (LIIALFFLAAFTFILYFCNSL) traverse the membrane as a helical segment. Position 200 (Gly200) is a topological domain, extracellular. The chain crosses the membrane as a helical span at residues 201–221 (MIAVGQALCGMPWGCFQCLTV). The Cytoplasmic portion of the chain corresponds to 222-234 (SYASEICPLALRY). A helical membrane pass occupies residues 235–255 (YLTTYSNLCWLFGQLFAAGIM). Residues 256–270 (KNSQKKYADSELGYK) lie on the Extracellular side of the membrane. The chain crosses the membrane as a helical span at residues 271–291 (LPFALQWILPVPLALGIFFAP). Residues 292–363 (ESPWWLVKKG…EDKINRRRTR (72 aa)) lie on the Cytoplasmic side of the membrane. A helical transmembrane segment spans residues 364-384 (ITCLCWAGQATCGSILIGYST). Over 385 to 397 (YFYEKAGVSTEMS) the chain is Extracellular. Residues 398–418 (FTFSIIQYCLGICATFLSWWA) form a helical membrane-spanning segment. Residues 419 to 426 (SKYFGRYD) lie on the Cytoplasmic side of the membrane. The chain crosses the membrane as a helical span at residues 427 to 447 (LYAFGLAFQTIVFFIIGGLGC). At 448 to 459 (SSTHGSKMGSGS) the chain is on the extracellular side. Residues 460-480 (LLMAVAFFYNLGIAPVVFCLV) form a helical membrane-spanning segment. Residues 481-492 (SEMPSSRLRTKT) are Cytoplasmic-facing. A helical membrane pass occupies residues 493 to 513 (IILARNTYNVVSIICSVLILY). Over 514–525 (QLNSKKWNWGAK) the chain is Extracellular. Residues 526–546 (SGFFWGVLCFCTLIWAVVDLP) traverse the membrane as a helical segment. At 547–602 (ETAGKTFVEINELFKLGVSARKFKSTKVDPFVVKNPPKDVSHNDPKGDIEASIAEE) the chain is on the cytoplasmic side. Residues 580-602 (KNPPKDVSHNDPKGDIEASIAEE) form a disordered region. Basic and acidic residues predominate over residues 582–595 (PPKDVSHNDPKGDI).

The protein belongs to the major facilitator superfamily. Sugar transporter (TC 2.A.1.1) family.

It is found in the cell membrane. Its function is as follows. High-affinity uptake of maltose and maltotriose. Also transports alpha-methylglucoside, glucose and turanose but not melezitose or trehalose. In Saccharomyces cerevisiae (strain AWRI1631) (Baker's yeast), this protein is Alpha-glucosides permease MPH3 (MPH3).